The primary structure comprises 618 residues: Proline--tRNA ligase (618 aa).

Belongs to the class-II aminoacyl-tRNA synthetase family. ProS type 1 subfamily. As to quaternary structure, homodimer.

It localises to the cytoplasm. The enzyme catalyses tRNA(Pro) + L-proline + ATP = L-prolyl-tRNA(Pro) + AMP + diphosphate. In terms of biological role, catalyzes the attachment of proline to tRNA(Pro) in a two-step reaction: proline is first activated by ATP to form Pro-AMP and then transferred to the acceptor end of tRNA(Pro). As ProRS can inadvertently accommodate and process non-cognate amino acids such as alanine and cysteine, to avoid such errors it has two additional distinct editing activities against alanine. One activity is designated as 'pretransfer' editing and involves the tRNA(Pro)-independent hydrolysis of activated Ala-AMP. The other activity is designated 'posttransfer' editing and involves deacylation of mischarged Ala-tRNA(Pro). The misacylated Cys-tRNA(Pro) is not edited by ProRS. The sequence is that of Proline--tRNA ligase from Streptococcus pyogenes serotype M1.